A 212-amino-acid polypeptide reads, in one-letter code: Large ribosomal subunit protein uL3 (212 aa).

It belongs to the universal ribosomal protein uL3 family. In terms of assembly, part of the 50S ribosomal subunit. Forms a cluster with proteins L14 and L19.

Its function is as follows. One of the primary rRNA binding proteins, it binds directly near the 3'-end of the 23S rRNA, where it nucleates assembly of the 50S subunit. This is Large ribosomal subunit protein uL3 from Ruminiclostridium cellulolyticum (strain ATCC 35319 / DSM 5812 / JCM 6584 / H10) (Clostridium cellulolyticum).